A 344-amino-acid chain; its full sequence is Palmitoyltransferase ZDHHC4 (344 aa).

Residues 1 to 2 (MD) lie on the Lumenal side of the membrane. The chain crosses the membrane as a helical span at residues 3–23 (FLVLFLFYLASVLMGLVLICV). Over 24–67 (CSKTHSLKGLARGGAQIFSCIIPECLQRAVHGLLHYLFHTRNHT) the chain is Cytoplasmic. Residues 68-88 (FIVLHLVLQGMVYTEYTWEVF) form a helical membrane-spanning segment. The Lumenal portion of the chain corresponds to 89-99 (GYCQELELSLH). The chain crosses the membrane as a helical span at residues 100 to 120 (YLLLPYLLLGVNLFFFTLTCG). The Cytoplasmic segment spans residues 121–192 (TNPGIITKAN…NNCIGAWNIR (72 aa)). The DHHC domain occupies 149 to 199 (VRCSTCDLRKPARSKHCSVCNWCVHRFDHHCVWVNNCIGAWNIRYFLIYVL). The active-site S-palmitoyl cysteine intermediate is cysteine 179. Residues 193–213 (YFLIYVLTLTASAATVAIVST) traverse the membrane as a helical segment. Topologically, residues 214–255 (TFLVHLVVMSDLYQETYIDDLGHLHVMDTVFLIQYLFLTFPR) are lumenal. Residues 256 to 276 (IVFMLGFVVVLSFLLGGYLLF) form a helical membrane-spanning segment. The Cytoplasmic segment spans residues 277-344 (VLYLAATNQT…FPCHERKKQE (68 aa)). Positions 341–344 (KKQE) match the Di-lysine motif motif.

The protein belongs to the DHHC palmitoyltransferase family. In terms of assembly, interacts with CPT1A.

It is found in the endoplasmic reticulum membrane. The protein resides in the golgi apparatus membrane. Its subcellular location is the cell membrane. It catalyses the reaction L-cysteinyl-[protein] + hexadecanoyl-CoA = S-hexadecanoyl-L-cysteinyl-[protein] + CoA. Palmitoyltransferase that catalyzes the addition of palmitate onto protein substrates including the D(2) dopamine receptor DRD2, GSK3B or MAVS. Mediates GSK3B palmitoylation to prevent its AKT1-mediated phosphorylation leading to activation of the STAT3 signaling pathway. Also catalyzes MAVS palmitoylation which promotes its stabilization and activation by inhibiting 'Lys-48'- but facilitating 'Lys-63'-linked ubiquitination. The protein is Palmitoyltransferase ZDHHC4 of Homo sapiens (Human).